The primary structure comprises 623 residues: Kelch repeat and BTB domain-containing protein 11 (623 aa).

Residues 1 to 129 (MEHAVAPCVL…PEEPGEPAPV (129 aa)) are disordered. Positions 12-31 (PGTEPGAAGESESEGAASPA) are enriched in low complexity. Residues 42 to 55 (CFSSGEESPPQSLA) show a composition bias toward polar residues. A phosphoserine mark is found at Ser-64, Ser-67, Ser-87, and Ser-107. A compositionally biased stretch (low complexity) spans 79 to 91 (EAGSAGAASPEEL). A BTB domain is found at 140 to 196 (PDLVLEVSGRRLRAHKAVLAARSDYFRARASRDVLRVQGVSLTALRLLLADAYSGRM). 4 Kelch repeats span residues 311-359 (RPQS…VLYN), 360-412 (YLFV…ALDG), 413-455 (HLYA…ATTC), and 458-500 (EIYV…ALDG).

The chain is Kelch repeat and BTB domain-containing protein 11 (KBTBD11) from Homo sapiens (Human).